We begin with the raw amino-acid sequence, 99 residues long: Putative protein YgeP (99 aa).

The chain is Putative protein YgeP (ygeP) from Escherichia coli (strain K12).